A 179-amino-acid polypeptide reads, in one-letter code: Endoribonuclease YbeY (179 aa).

3 residues coordinate Zn(2+): His148, His152, and His158.

Belongs to the endoribonuclease YbeY family. Zn(2+) is required as a cofactor.

The protein localises to the cytoplasm. Its function is as follows. Single strand-specific metallo-endoribonuclease involved in late-stage 70S ribosome quality control and in maturation of the 3' terminus of the 16S rRNA. The sequence is that of Endoribonuclease YbeY from Prochlorococcus marinus (strain AS9601).